A 160-amino-acid chain; its full sequence is Transcriptional regulator MraZ (160 aa).

SpoVT-AbrB domains follow at residues 5–50 and 93–136; these read KFDT…GDQV and AVEC…SQAV.

Belongs to the MraZ family. In terms of assembly, forms oligomers.

The protein resides in the cytoplasm. The protein localises to the nucleoid. The chain is Transcriptional regulator MraZ from Geobacter sp. (strain M21).